The primary structure comprises 189 residues: HTH-type transcriptional repressor AcnR (189 aa).

The 61-residue stretch at 10-70 (AERKVEILSG…EVAHEDMRKM (61 aa)) folds into the HTH tetR-type domain. Residues 33 to 52 (TVARLEETIGKSRGAIFHHY) constitute a DNA-binding region (H-T-H motif). Citrate is bound by residues 79–80 (LI), Arg-130, and Gln-134. Glu-181 contributes to the Mg(2+) binding site. Residue Arg-185 participates in citrate binding.

In terms of assembly, homodimer.

AcnR negatively controls the expression of the aconitase gene acn. This Corynebacterium jeikeium (strain K411) protein is HTH-type transcriptional repressor AcnR.